The primary structure comprises 92 residues: Small ribosomal subunit protein uS19 (92 aa).

It belongs to the universal ribosomal protein uS19 family.

Functionally, protein S19 forms a complex with S13 that binds strongly to the 16S ribosomal RNA. The sequence is that of Small ribosomal subunit protein uS19 from Corynebacterium kroppenstedtii (strain DSM 44385 / JCM 11950 / CIP 105744 / CCUG 35717).